Reading from the N-terminus, the 544-residue chain is Chaperonin GroEL (544 aa).

ATP contacts are provided by residues 30 to 33 (TLGP), K51, 87 to 91 (DGTTT), G415, 479 to 481 (NAA), and D495.

It belongs to the chaperonin (HSP60) family. Forms a cylinder of 14 subunits composed of two heptameric rings stacked back-to-back. Interacts with the co-chaperonin GroES.

Its subcellular location is the cytoplasm. The enzyme catalyses ATP + H2O + a folded polypeptide = ADP + phosphate + an unfolded polypeptide.. In terms of biological role, together with its co-chaperonin GroES, plays an essential role in assisting protein folding. The GroEL-GroES system forms a nano-cage that allows encapsulation of the non-native substrate proteins and provides a physical environment optimized to promote and accelerate protein folding. The polypeptide is Chaperonin GroEL (Francisella tularensis subsp. tularensis (strain SCHU S4 / Schu 4)).